Here is a 206-residue protein sequence, read N- to C-terminus: Ras-related protein Rab-18 (206 aa).

Residues S17, G20, K21, S22, S23, D34, P35, T40, G66, K123, D125, and A152 each coordinate GTP. S22 is a binding site for Mg(2+). 2 short sequence motifs (switch) span residues 31–45 (DTFD…GVDF) and 63–80 (DTAG…YYRG). Residue T40 coordinates Mg(2+). C199 carries S-palmitoyl cysteine lipidation. Position 203 is a cysteine methyl ester (C203). Residue C203 is the site of S-geranylgeranyl cysteine attachment. A propeptide spans 204–206 (SML) (removed in mature form).

The protein belongs to the small GTPase superfamily. Rab family. It depends on Mg(2+) as a cofactor.

It localises to the endoplasmic reticulum membrane. Its subcellular location is the golgi apparatus. The protein resides in the cis-Golgi network membrane. It is found in the lipid droplet. The protein localises to the apical cell membrane. It carries out the reaction GTP + H2O = GDP + phosphate + H(+). Regulated by guanine nucleotide exchange factors (GEFs) which promote the exchange of bound GDP for free GTP. Regulated by GTPase activating proteins (GAPs) which increase the GTP hydrolysis activity at the ER membrane. Inhibited by GDP dissociation inhibitors (GDIs) which prevent Rab-GDP dissociation. In terms of biological role, the small GTPases Rab are key regulators of intracellular membrane trafficking, from the formation of transport vesicles to their fusion with membranes. Rabs cycle between an inactive GDP-bound form and an active GTP-bound form that is able to recruit to membranes different sets of downstream effectors directly responsible for vesicle formation, movement, tethering and fusion. RAB18 is required for the localization of ZFYVE1 to lipid droplets and for its function in mediating the formation of endoplasmic reticulum-lipid droplets (ER-LD) contacts. Also required for maintaining endoplasmic reticulum structure. Plays a role in apical endocytosis/recycling. Plays a key role in eye and brain development and neurodegeneration. The protein is Ras-related protein Rab-18 (RAB18) of Gallus gallus (Chicken).